The sequence spans 529 residues: UDP-glucuronosyltransferase 2B7 (529 aa).

Residues 1–23 form the signal peptide; the sequence is MSVKWTSVILLIQLSFCFSSGNC. N-linked (GlcNAc...) asparagine glycosylation is found at Asn67, Asn68, and Asn315. Residues 373–379 and Asp398 each bind UDP-alpha-D-glucuronate; that span reads THGGANG. A helical membrane pass occupies residues 493 to 509; the sequence is VIGFLLVCVATVIFIVT.

The protein belongs to the UDP-glycosyltransferase family.

The protein localises to the endoplasmic reticulum membrane. It catalyses the reaction glucuronate acceptor + UDP-alpha-D-glucuronate = acceptor beta-D-glucuronoside + UDP + H(+). The catalysed reaction is 17alpha-estradiol + UDP-alpha-D-glucuronate = 17alpha-estradiol 17-O-(beta-D-glucuronate) + UDP + H(+). The enzyme catalyses 17beta-estradiol + UDP-alpha-D-glucuronate = 17beta-estradiol 17-O-(beta-D-glucuronate) + UDP + H(+). It carries out the reaction 2-hydroxy-17beta-estradiol + UDP-alpha-D-glucuronate = 2-hydroxy-17beta-estradiol 3-O-(beta-D-glucuronate) + UDP + H(+). It catalyses the reaction 4-hydroxy-17beta-estradiol + UDP-alpha-D-glucuronate = 17beta-estradiol 4-O-(beta-D-glucuronate) + UDP + H(+). The catalysed reaction is 4-hydroxyestrone + UDP-alpha-D-glucuronate = estrone 4-O-(beta-D-glucuronate) + UDP + H(+). The enzyme catalyses 16alpha-hydroxyestrone + UDP-alpha-D-glucuronate = 16alpha-hydroxyestrone 16-O-(beta-D-glucuronate) + UDP + H(+). It carries out the reaction 16alpha,17beta-estriol + UDP-alpha-D-glucuronate = 16alpha,17beta-estriol 16-O-(beta-D-glucuronate) + UDP + H(+). It catalyses the reaction 16beta,17beta-estriol + UDP-alpha-D-glucuronate = 16beta,17beta-estriol 16-O-(beta-D-glucuronate) + UDP + H(+). The catalysed reaction is 16alpha,17alpha-estriol + UDP-alpha-D-glucuronate = 16alpha,17alpha-estriol 16-O-(beta-D-glucuronate) + UDP + H(+). The enzyme catalyses 16alpha,17alpha-estriol + UDP-alpha-D-glucuronate = 16alpha,17alpha-estriol 17-O-(beta-D-glucuronate) + UDP + H(+). It carries out the reaction epitestosterone + UDP-alpha-D-glucuronate = epitestosterone 17-O-(beta-D-glucuronate) + UDP + H(+). It catalyses the reaction hyodeoxycholate + UDP-alpha-D-glucuronate = hyodeoxycholate 6-O-(beta-D-glucuronate) + UDP + H(+). The catalysed reaction is hyocholate + UDP-alpha-D-glucuronate = hyocholate 6-O-(beta-D-glucuronate) + UDP + H(+). The enzyme catalyses all-trans-retinoate + UDP-alpha-D-glucuronate = all-trans-retinoyl-1-O-(beta-D-glucuronate) + UDP. It carries out the reaction all-trans-4-hydroxyretinoate + UDP-alpha-D-glucuronate = all-trans-4-hydroxy-4-O-(beta-D-glucuronide)-retinoate + UDP + H(+). It catalyses the reaction (E)-ferulate + UDP-alpha-D-glucuronate = (E)-ferulic acid beta-D-glucuronate ester + UDP. The catalysed reaction is 8-iso-prostaglandin F2alpha + UDP-alpha-D-glucuronate = 8-iso-prostaglandin F2alpha-glucuronide + UDP + H(+). The enzyme catalyses 5-epi-5-F2t-IsoP + UDP-alpha-D-glucuronate = 5-epi-5-F2t-IsoP-glucuronide + UDP + H(+). It carries out the reaction (5Z,8Z,11Z,14Z)-eicosatetraenoate + UDP-alpha-D-glucuronate = O-[(5Z),(8Z),(11Z),(14Z)-eicosatetraenoyl]-beta-D-glucuronate + UDP. It catalyses the reaction 15-hydroxy-(5Z,8Z,11Z,13E)-eicosatetraenoate + UDP-alpha-D-glucuronate = 15-O-(beta-D-glucuronosyl)-(5Z,8Z,11Z,14Z)-eicosatetraenoate + UDP + H(+). The catalysed reaction is 20-hydroxy-(5Z,8Z,11Z,14Z)-eicosatetraenoate + UDP-alpha-D-glucuronate = 20-O-(beta-D-glucuronosyl)-(5Z,8Z,11Z,14Z)-eicosatetraenoate + UDP + H(+). The enzyme catalyses (E)-ferulate + UDP-alpha-D-glucuronate = (E)-4-O-(beta-D-glucuronosyl)-ferulate + UDP + H(+). It carries out the reaction prostaglandin B1 + UDP-alpha-D-glucuronate = 15-O-(beta-D-glucuronosyl)-prostaglandin B1 + UDP + H(+). It catalyses the reaction mycophenolate + UDP-alpha-D-glucuronate = mycophenolic acid O-acyl-beta-D-glucuronide + UDP. The catalysed reaction is losartan + UDP-alpha-D-glucuronate = losartan-2-N-beta-D-glucuronide + UDP. The enzyme catalyses candesartan + UDP-alpha-D-glucuronate = candesartan O-beta-D-glucuronoside + UDP. It carries out the reaction candesartan + UDP-alpha-D-glucuronate = candesartan-2-N-beta-D-glucuronide + UDP. It catalyses the reaction zolasartan + UDP-alpha-D-glucuronate = zolarsartan O-beta-D-glucuronoside + UDP. In terms of biological role, UDP-glucuronosyltransferase (UGT) that catalyzes phase II biotransformation reactions in which lipophilic substrates are conjugated with glucuronic acid to increase the metabolite's water solubility, thereby facilitating excretion into either the urine or bile. Essential for the elimination and detoxification of drugs, xenobiotics and endogenous compounds. Catalyzes the glucuronidation of endogenous steroid hormones such as androgens (epitestosterone, androsterone) and estrogens (estradiol, epiestradiol, estriol, catechol estrogens). Also regulates the levels of retinoic acid, a major metabolite of vitamin A involved in apoptosis, cellular growth and differentiation, and embryonic development. Contributes to bile acid (BA) detoxification by catalyzing the glucuronidation of BA substrates, which are natural detergents for dietary lipids absorption. Involved in the glucuronidation of arachidonic acid (AA) and AA-derived eicosanoids including 15-HETE, 20-HETE, PGE2, PGB1 and F2-isoprostanes (8-iso-PGF2alpha and 5-epi-5-F2t-IsoP). Involved in the glucuronidation of the phytochemical ferulic acid at the phenolic or the carboxylic acid group. Involved in the glucuronidation of the AGTR1 angiotensin receptor antagonist losartan, caderastan and zolarsatan, drugs which can inhibit the effect of angiotensin II. Also metabolizes mycophenolate, an immunosuppressive agent. The chain is UDP-glucuronosyltransferase 2B7 from Homo sapiens (Human).